Consider the following 364-residue polypeptide: UDP-N-acetylglucosamine--N-acetylmuramyl-(pentapeptide) pyrophosphoryl-undecaprenol N-acetylglucosamine transferase (364 aa).

Residues 10-12, Asn128, Arg170, Ser199, Ile250, and Gln295 each bind UDP-N-acetyl-alpha-D-glucosamine; that span reads TGG.

This sequence belongs to the glycosyltransferase 28 family. MurG subfamily.

It localises to the cell inner membrane. The catalysed reaction is di-trans,octa-cis-undecaprenyl diphospho-N-acetyl-alpha-D-muramoyl-L-alanyl-D-glutamyl-meso-2,6-diaminopimeloyl-D-alanyl-D-alanine + UDP-N-acetyl-alpha-D-glucosamine = di-trans,octa-cis-undecaprenyl diphospho-[N-acetyl-alpha-D-glucosaminyl-(1-&gt;4)]-N-acetyl-alpha-D-muramoyl-L-alanyl-D-glutamyl-meso-2,6-diaminopimeloyl-D-alanyl-D-alanine + UDP + H(+). Its pathway is cell wall biogenesis; peptidoglycan biosynthesis. Its function is as follows. Cell wall formation. Catalyzes the transfer of a GlcNAc subunit on undecaprenyl-pyrophosphoryl-MurNAc-pentapeptide (lipid intermediate I) to form undecaprenyl-pyrophosphoryl-MurNAc-(pentapeptide)GlcNAc (lipid intermediate II). The chain is UDP-N-acetylglucosamine--N-acetylmuramyl-(pentapeptide) pyrophosphoryl-undecaprenol N-acetylglucosamine transferase from Chlorobaculum tepidum (strain ATCC 49652 / DSM 12025 / NBRC 103806 / TLS) (Chlorobium tepidum).